Consider the following 307-residue polypeptide: MTDSTYDVARVRTYLQDLQTRIADALGALDGTPLATDAWQRGPAERLRGGGCTRILEGGRVFERAGIGFSDVAGDALPPSASAARPQLAGRGFEALGVSLVLHPRNPYCPTVHMNVRMLIATKPGEEPVFWFGGGMDLTPVYGFEDDARHFHQTCKDALDPFGVELYPRFKKWCDEYFFLKHRNEMRGIGGIFFDDFSEPGFERSFDMMQSVGDAFLQAYLPIVERRAELPYGERERDFQAYRRGRYVEFNLVFDRGTLFGLQSGGRTESILMSMPPVANWRYNWQPEPGSPEARLYSDFIVPRDWI.

S99 contacts substrate. A divalent metal cation is bound by residues H103 and H113. H113 acts as the Proton donor in catalysis. Position 115 to 117 (115 to 117 (NVR)) interacts with substrate. The a divalent metal cation site is built by H152 and H182. The segment at 247–282 (YVEFNLVFDRGTLFGLQSGGRTESILMSMPPVANWR) is important for dimerization. 265 to 267 (GGR) contacts substrate.

This sequence belongs to the aerobic coproporphyrinogen-III oxidase family. Homodimer. A divalent metal cation is required as a cofactor.

It is found in the cytoplasm. It catalyses the reaction coproporphyrinogen III + O2 + 2 H(+) = protoporphyrinogen IX + 2 CO2 + 2 H2O. It functions in the pathway porphyrin-containing compound metabolism; protoporphyrin-IX biosynthesis; protoporphyrinogen-IX from coproporphyrinogen-III (O2 route): step 1/1. Its function is as follows. Involved in the heme biosynthesis. Catalyzes the aerobic oxidative decarboxylation of propionate groups of rings A and B of coproporphyrinogen-III to yield the vinyl groups in protoporphyrinogen-IX. In Burkholderia lata (strain ATCC 17760 / DSM 23089 / LMG 22485 / NCIMB 9086 / R18194 / 383), this protein is Oxygen-dependent coproporphyrinogen-III oxidase.